The sequence spans 140 residues: MALIYKTVAQTETGREGSVKTLDGFQTKLSFPKPDLSVQTENNPEQLFASAYASCFSQAVIVVMQQHQFSFSKKPVVSVKVELHQENGLFHIKAGVELTTNSNDQEVGKKLIQKAHEMCPFSRLIRNENFLGLTLNGIKL.

This sequence belongs to the OsmC/Ohr family.

The protein is Organic hydroperoxide resistance protein-like of Mycoplasma genitalium (strain ATCC 33530 / DSM 19775 / NCTC 10195 / G37) (Mycoplasmoides genitalium).